A 427-amino-acid polypeptide reads, in one-letter code: Glutamate-1-semialdehyde 2,1-aminomutase (427 aa).

N6-(pyridoxal phosphate)lysine is present on K267.

The protein belongs to the class-III pyridoxal-phosphate-dependent aminotransferase family. HemL subfamily. Homodimer. Requires pyridoxal 5'-phosphate as cofactor.

Its subcellular location is the cytoplasm. It catalyses the reaction (S)-4-amino-5-oxopentanoate = 5-aminolevulinate. It participates in porphyrin-containing compound metabolism; protoporphyrin-IX biosynthesis; 5-aminolevulinate from L-glutamyl-tRNA(Glu): step 2/2. The sequence is that of Glutamate-1-semialdehyde 2,1-aminomutase from Citrifermentans bemidjiense (strain ATCC BAA-1014 / DSM 16622 / JCM 12645 / Bem) (Geobacter bemidjiensis).